Reading from the N-terminus, the 388-residue chain is Succinate--CoA ligase [ADP-forming] subunit beta (388 aa).

The region spanning 9-244 (KEILRKFGVA…LDEEDPAEIE (236 aa)) is the ATP-grasp domain. ATP contacts are provided by residues Lys-46, 53-55 (GRG), Glu-99, Ala-102, and Glu-107. Mg(2+)-binding residues include Asn-199 and Asp-213. Substrate-binding positions include Asn-264 and 321 to 323 (GIM).

The protein belongs to the succinate/malate CoA ligase beta subunit family. Heterotetramer of two alpha and two beta subunits. It depends on Mg(2+) as a cofactor.

It carries out the reaction succinate + ATP + CoA = succinyl-CoA + ADP + phosphate. It catalyses the reaction GTP + succinate + CoA = succinyl-CoA + GDP + phosphate. It functions in the pathway carbohydrate metabolism; tricarboxylic acid cycle; succinate from succinyl-CoA (ligase route): step 1/1. In terms of biological role, succinyl-CoA synthetase functions in the citric acid cycle (TCA), coupling the hydrolysis of succinyl-CoA to the synthesis of either ATP or GTP and thus represents the only step of substrate-level phosphorylation in the TCA. The beta subunit provides nucleotide specificity of the enzyme and binds the substrate succinate, while the binding sites for coenzyme A and phosphate are found in the alpha subunit. The polypeptide is Succinate--CoA ligase [ADP-forming] subunit beta (Burkholderia thailandensis (strain ATCC 700388 / DSM 13276 / CCUG 48851 / CIP 106301 / E264)).